A 158-amino-acid polypeptide reads, in one-letter code: Transcription elongation factor GreA (158 aa).

The stretch at 1 to 26 (MNKVPLTEKGAQQLREELQELKTVVR) forms a coiled coil.

Belongs to the GreA/GreB family.

In terms of biological role, necessary for efficient RNA polymerase transcription elongation past template-encoded arresting sites. The arresting sites in DNA have the property of trapping a certain fraction of elongating RNA polymerases that pass through, resulting in locked ternary complexes. Cleavage of the nascent transcript by cleavage factors such as GreA or GreB allows the resumption of elongation from the new 3'terminus. GreA releases sequences of 2 to 3 nucleotides. In Nitrosococcus oceani (strain ATCC 19707 / BCRC 17464 / JCM 30415 / NCIMB 11848 / C-107), this protein is Transcription elongation factor GreA.